A 179-amino-acid chain; its full sequence is Putative ADP-ribosylation factor-like protein 5C (179 aa).

Residue Gly-2 is the site of N-myristoyl glycine attachment. GTP is bound by residues 23-30 (GLDNEGKT), 66-70 (DIVRP), and 125-128 (NKQD).

This sequence belongs to the small GTPase superfamily. Arf family.

In terms of biological role, binds and exchanges GTP and GDP. In Homo sapiens (Human), this protein is Putative ADP-ribosylation factor-like protein 5C (ARL5C).